Reading from the N-terminus, the 78-residue chain is Colicin-V immunity protein (78 aa).

In terms of biological role, this protein is able to protect a cell, which harbors the plasmid ColV encoding colicin V, against colicin V. The chain is Colicin-V immunity protein (cvi) from Escherichia coli.